A 384-amino-acid polypeptide reads, in one-letter code: L-cysteine:1D-myo-inositol 2-amino-2-deoxy-alpha-D-glucopyranoside ligase (384 aa).

Residue cysteine 16 participates in Zn(2+) binding. L-cysteinyl-5'-AMP-binding positions include 16-19, threonine 31, and 54-56; these read CGIT and NVT. The 'HIGH' region motif lies at 18–28; the sequence is ITPYDATHLGH. The 'ERGGDP' region signature appears at 159–164; it reads ERGGDP. Tryptophan 199 lines the L-cysteinyl-5'-AMP pocket. Position 203 (cysteine 203) interacts with Zn(2+). Residue 221–223 participates in L-cysteinyl-5'-AMP binding; it reads GSD. Histidine 228 provides a ligand contact to Zn(2+). Isoleucine 255 is an L-cysteinyl-5'-AMP binding site. A 'KMSKS' region motif is present at residues 261–265; that stretch reads KMSKS.

It belongs to the class-I aminoacyl-tRNA synthetase family. MshC subfamily. As to quaternary structure, monomer. Requires Zn(2+) as cofactor.

The catalysed reaction is 1D-myo-inositol 2-amino-2-deoxy-alpha-D-glucopyranoside + L-cysteine + ATP = 1D-myo-inositol 2-(L-cysteinylamino)-2-deoxy-alpha-D-glucopyranoside + AMP + diphosphate + H(+). Catalyzes the ATP-dependent condensation of GlcN-Ins and L-cysteine to form L-Cys-GlcN-Ins. The polypeptide is L-cysteine:1D-myo-inositol 2-amino-2-deoxy-alpha-D-glucopyranoside ligase (Mycobacterium avium (strain 104)).